Here is a 142-residue protein sequence, read N- to C-terminus: UPF0310 protein PYRAB08750 (142 aa).

This sequence belongs to the UPF0310 family.

This is UPF0310 protein PYRAB08750 from Pyrococcus abyssi (strain GE5 / Orsay).